Consider the following 158-residue polypeptide: 2-C-methyl-D-erythritol 2,4-cyclodiphosphate synthase (158 aa).

Residues Asp-8 and His-10 each contribute to the a divalent metal cation site. 4-CDP-2-C-methyl-D-erythritol 2-phosphate-binding positions include 8–10 (DVH) and 34–35 (HS). An a divalent metal cation-binding site is contributed by His-42. 4-CDP-2-C-methyl-D-erythritol 2-phosphate-binding positions include 56–58 (DIG), 61–65 (FPDTD), 100–106 (AQVPKMA), 132–135 (TTTE), Phe-139, and Arg-142.

Belongs to the IspF family. Homotrimer. A divalent metal cation serves as cofactor.

The enzyme catalyses 4-CDP-2-C-methyl-D-erythritol 2-phosphate = 2-C-methyl-D-erythritol 2,4-cyclic diphosphate + CMP. It functions in the pathway isoprenoid biosynthesis; isopentenyl diphosphate biosynthesis via DXP pathway; isopentenyl diphosphate from 1-deoxy-D-xylulose 5-phosphate: step 4/6. Its function is as follows. Involved in the biosynthesis of isopentenyl diphosphate (IPP) and dimethylallyl diphosphate (DMAPP), two major building blocks of isoprenoid compounds. Catalyzes the conversion of 4-diphosphocytidyl-2-C-methyl-D-erythritol 2-phosphate (CDP-ME2P) to 2-C-methyl-D-erythritol 2,4-cyclodiphosphate (ME-CPP) with a corresponding release of cytidine 5-monophosphate (CMP). The chain is 2-C-methyl-D-erythritol 2,4-cyclodiphosphate synthase from Sodalis glossinidius (strain morsitans).